The sequence spans 343 residues: MDTMYWKDNTLFLLDQTKLPIEVKYVKLKTYEEVAEAIVSMKVRGAPAIGAAAAYGMVLGVMGYRNDQNLEVYLKNVYETLKNTRPTAVNLFWALDRMWKKYLEVKNQTFEEIANALLNEANSIFYEDIELNKKIGAYGLEVVPENASILTHCNAGALATAGYGTALGVVRAAFEAGKLRKVFADETRPLLQGARLTAFELLEDGIDVTLICDNMAGYVMSLGLVDLVVVGADRVTANGDVANKIGTYSLAILAKEHGIPFYVAAPYSTIDLNLTSGQDIPIEERNPDEVRKIGDRLIAPPQVKVFNPAFDVTPAKYITGIITDRGIVRPPYKENIKKLFGGK.

Substrate-binding positions include 44 to 46, R85, and Q192; that span reads RGA. The active-site Proton donor is D233. 243–244 is a substrate binding site; it reads NK.

It belongs to the eIF-2B alpha/beta/delta subunits family. MtnA subfamily.

The enzyme catalyses 5-(methylsulfanyl)-alpha-D-ribose 1-phosphate = 5-(methylsulfanyl)-D-ribulose 1-phosphate. Its pathway is amino-acid biosynthesis; L-methionine biosynthesis via salvage pathway; L-methionine from S-methyl-5-thio-alpha-D-ribose 1-phosphate: step 1/6. Catalyzes the interconversion of methylthioribose-1-phosphate (MTR-1-P) into methylthioribulose-1-phosphate (MTRu-1-P). The polypeptide is Methylthioribose-1-phosphate isomerase (Carboxydothermus hydrogenoformans (strain ATCC BAA-161 / DSM 6008 / Z-2901)).